The chain runs to 128 residues: Iron-sulfur cluster insertion protein ErpA (128 aa).

Iron-sulfur cluster is bound by residues Cys56, Cys120, and Cys122.

The protein belongs to the HesB/IscA family. In terms of assembly, homodimer. It depends on iron-sulfur cluster as a cofactor.

Its function is as follows. Required for insertion of 4Fe-4S clusters for at least IspG. The protein is Iron-sulfur cluster insertion protein ErpA of Xylella fastidiosa (strain M23).